Consider the following 592-residue polypeptide: Aspartate--tRNA ligase (592 aa).

Glutamate 171 contributes to the L-aspartate binding site. Residues 195 to 198 (QLFK) form an aspartate region. Arginine 217 provides a ligand contact to L-aspartate. Residues 217–219 (RDE) and glutamine 226 contribute to the ATP site. Histidine 448 contributes to the L-aspartate binding site. Glutamate 482 provides a ligand contact to ATP. Arginine 489 provides a ligand contact to L-aspartate. 534 to 537 (GLDR) is an ATP binding site.

It belongs to the class-II aminoacyl-tRNA synthetase family. Type 1 subfamily. Homodimer.

It localises to the cytoplasm. The catalysed reaction is tRNA(Asp) + L-aspartate + ATP = L-aspartyl-tRNA(Asp) + AMP + diphosphate. In terms of biological role, catalyzes the attachment of L-aspartate to tRNA(Asp) in a two-step reaction: L-aspartate is first activated by ATP to form Asp-AMP and then transferred to the acceptor end of tRNA(Asp). This chain is Aspartate--tRNA ligase, found in Pseudoalteromonas translucida (strain TAC 125).